Consider the following 194-residue polypeptide: Putative adenylate kinase (194 aa).

5 residues coordinate ATP: Gly16, Gly18, Lys19, Thr20, and Thr21. The segment at 36–59 (SVGELLAGTPYVTYIPELDTYEIV) is NMP. The tract at residues 108–118 (RRGWPLKKILD) is LID. Arg109 serves as a coordination point for ATP.

This sequence belongs to the adenylate kinase family. AK6 subfamily. As to quaternary structure, interacts with uS11. Not a structural component of 40S pre-ribosomes, but transiently interacts with them by binding to uS11.

The enzyme catalyses AMP + ATP = 2 ADP. It catalyses the reaction ATP + H2O = ADP + phosphate + H(+). Its function is as follows. Broad-specificity nucleoside monophosphate (NMP) kinase that catalyzes the reversible transfer of the terminal phosphate group between nucleoside triphosphates and monophosphates. Also has ATPase activity. Involved in the late maturation steps of the 30S ribosomal particles, specifically 16S rRNA maturation. While NMP activity is not required for ribosome maturation, ATPase activity is. Associates transiently with small ribosomal subunit protein uS11. ATP hydrolysis breaks the interaction with uS11. May temporarily remove uS11 from the ribosome to enable a conformational change of the ribosomal RNA that is needed for the final maturation step of the small ribosomal subunit. The chain is Putative adenylate kinase from Pyrobaculum aerophilum (strain ATCC 51768 / DSM 7523 / JCM 9630 / CIP 104966 / NBRC 100827 / IM2).